The primary structure comprises 223 residues: Prolactin-3D4 (223 aa).

Positions 1 to 28 (MQLTLTLSGSSMQLLLLVSNLLLWENMA) are cleaved as a signal peptide. Cystine bridges form between cysteine 80–cysteine 198 and cysteine 215–cysteine 223. Residues asparagine 108 and asparagine 157 are each glycosylated (N-linked (GlcNAc...) asparagine).

This sequence belongs to the somatotropin/prolactin family. Post-translationally, N-glycosylated.

It is found in the secreted. The polypeptide is Prolactin-3D4 (Prl3d4) (Rattus norvegicus (Rat)).